The sequence spans 210 residues: Homeobox protein Rhox5 (210 aa).

The segment at 29–117 is disordered; it reads KAEAFLQAGE…KNGKPEDRQM (89 aa). A DNA-binding region (homeobox; atypical) is located at residues 117-175; it reads MPLQGSRFAQQRLSELQSILQRTNSFDVPREDLYRLMDTCVARVQNWFKIRRAAARRNR.

Its subcellular location is the nucleus. Transcription factor required for differentiation of embryonic stem cells (ESCs) into primordial germ cells. This is Homeobox protein Rhox5 (Rhox5) from Mus minutoides (Southern African pygmy mouse).